A 472-amino-acid polypeptide reads, in one-letter code: MLCHVTRPDAVVMEIEVDAKANGEDCLNKVCRKLGIIEVDYFGLQFSGSKGENLWLNLRNRISQQMDNLTPCRLRLRVKFFVEPHLILQEQTRHLFFMHVKEDLHRGHLRMCSEQAQELSALLAQAEFGDYNQNTAKYWYTELCGSEPNQTTINSIIAKHKALEGLSQASVEYQALQLVSSLEHYGVEWHWARDAEAQRLAIGVGPEGIAICRDDFSLVNRISYPIIQIATQSGKSVYLTVTKESSDSVVLLFKLISNRAASGLYRAITETHAFYRCDTVTNAVMMQYSRDFKGHLASLFLNENINLGKKYVFDIRRTSKEVYDYARRALYNAGIVDMMSRPGERTPSNRSPSREQEGALDCGGCQQSRLLQEKLQKLREALLCMLCCEEEIDAAFCPCGHMVCCQNCAAQLQSCPVCRSEVEHVQHVYLPTCTSLLNLTIGENSPEPIHRGMAAHTCTTNDYSTSEKIYQN.

Residues 1-279 (MLCHVTRPDA…ETHAFYRCDT (279 aa)) form the FERM domain. Residues 384 to 419 (CMLCCEEEIDAAFCPCGHMVCCQNCAAQLQSCPVCR) form an RING-type zinc finger.

In terms of assembly, interacts with anxa5. Ubiquitous.

The protein resides in the cytoplasm. Its subcellular location is the cytosol. The enzyme catalyses S-ubiquitinyl-[E2 ubiquitin-conjugating enzyme]-L-cysteine + [acceptor protein]-L-lysine = [E2 ubiquitin-conjugating enzyme]-L-cysteine + N(6)-ubiquitinyl-[acceptor protein]-L-lysine.. It functions in the pathway protein modification; protein ubiquitination. Its function is as follows. E3 ubiquitin-protein ligase that mediates ubiquitination and subsequent proteasomal degradation of myosin regulatory light chain (MRLC). Regulates cell movements during gastrulation by acting downstream of fz7 to antagonize the frizzled-signaling pathway. The sequence is that of E3 ubiquitin-protein ligase MYLIP-A (mylipa) from Danio rerio (Zebrafish).